Reading from the N-terminus, the 302-residue chain is Polyadenylate-binding protein 2 (302 aa).

The segment covering 1–12 (MAAAAAAAAAAG) has biased composition (low complexity). A disordered region spans residues 1-111 (MAAAAAAAAA…EADPGDGAIE (111 aa)). A2 is subject to N-acetylalanine. Residues 2–141 (AAAAAAAAAA…LKELQNEVEK (140 aa)) form an interaction with SKIP region. The residue at position 17 (R17) is an Omega-N-methylarginine. The residue at position 19 (S19) is a Phosphoserine. Residues 30 to 47 (GAGGEAGEGDPGGAGDYG) are compositionally biased toward gly residues. Positions 51-68 (ESEELEPGELLPEPEPEE) are enriched in acidic residues. A Phosphoserine modification is found at S52. Residues 73–83 (PRAPPGAPGPG) show a composition bias toward pro residues. A Phosphoserine modification is found at S91. Residues 111–147 (EDPELEAIKARVREMEEEAEKLKELQNEVEKQMNMSP) adopt a coiled-coil conformation. Residues 115–143 (LEAIKARVREMEEEAEKLKELQNEVEKQM) form a stimulates PAPOLA region. S146 and S231 each carry phosphoserine. The RRM domain maps to 168–245 (RSIYVGNVDY…RQIKVIPKRT (78 aa)). Residues R234, R255, and R259 each carry the asymmetric dimethylarginine; alternate modification. Omega-N-methylarginine; alternate is present on residues R234, R255, and R259. Positions 255 to 302 (RGFPRSRYRARTTNYNSSRSRFYSGFNSRPRGRIYRGRARATSWYSPY) are strong poly(A) affinity and self-association. R261, R263, R265, R273, R275, R283, R285, R287, R290, R292, and R294 each carry asymmetric dimethylarginine. The interaction with PAPOLA stretch occupies residues 282-302 (SRPRGRIYRGRARATSWYSPY).

In terms of assembly, monomer and homooligomer. Identified in a IGF2BP1-dependent mRNP granule complex containing untranslated mRNAs. Binds RNA as a monomer and oligomerizes when bound to poly(A). Interacts with PAPOLA, but only in presence of oligo(A) RNA. Interacts with NUDT21/CPSF5 and transportin. Associates in a ternary complex with CPSF4 and NS/NS1 and interaction with NS/NS1, blocks nuclear export of host cell mRNAs. Associates in a single complex with SKIP and MYOD1 and interacts with SKIP in differentiated myocytes. May interact with SETX. Interacts (via RRM domain and C-terminal arginine-rich region) with ZFP36 (via hypophosphorylated form); this interaction occurs in the nucleus in a RNA-independent manner, decreases in presence of single-stranded poly(A) RNA-oligomer and in a p38-dependent-manner and may down-regulated RNA poly(A) polymerase activity. Component of the poly(A) tail exosome targeting (PAXT) complex composed of PABPN1, ZFC3H1 and MTREX. Interacts with ZFC3H1 in a RNase-insensitive manner. Interacts with FRG1. Interacts with ZC3H11A. In terms of processing, arginine dimethylation is asymmetric and involves PRMT1 and PRMT3. It does not influence the RNA binding properties. As to expression, ubiquitous.

Its subcellular location is the cytoplasm. It is found in the nucleus. It localises to the nucleus speckle. Involved in the 3'-end formation of mRNA precursors (pre-mRNA) by the addition of a poly(A) tail of 200-250 nt to the upstream cleavage product. Stimulates poly(A) polymerase (PAPOLA) conferring processivity on the poly(A) tail elongation reaction and also controls the poly(A) tail length. Increases the affinity of poly(A) polymerase for RNA. Is also present at various stages of mRNA metabolism including nucleocytoplasmic trafficking and nonsense-mediated decay (NMD) of mRNA. Cooperates with SKIP to synergistically activate E-box-mediated transcription through MYOD1 and may regulate the expression of muscle-specific genes. Binds to poly(A) and to poly(G) with high affinity. May protect the poly(A) tail from degradation. Subunit of the trimeric poly(A) tail exosome targeting (PAXT) complex, a complex that directs a subset of long and polyadenylated poly(A) RNAs for exosomal degradation. The RNA exosome is fundamental for the degradation of RNA in eukaryotic nuclei. Substrate targeting is facilitated by its cofactor MTREX, which links to RNA-binding protein adapters. The protein is Polyadenylate-binding protein 2 (Pabpn1) of Mus musculus (Mouse).